The sequence spans 165 residues: Neurotrophin-3 (165 aa).

The first 3 residues, 1 to 3 (IQS), serve as a signal peptide directing secretion. Positions 4–119 (TSMDQGSLSE…VLTXTSXXXR (116 aa)) are excised as a propeptide.

This sequence belongs to the NGF-beta family.

The protein resides in the secreted. Seems to promote the survival of visceral and proprioceptive sensory neurons. In Tropidophis haetianus (Haitian dwarf boa), this protein is Neurotrophin-3 (NTF3).